A 388-amino-acid chain; its full sequence is MICRTIVEGTTKISVPVPPPDANFPPSAAPVFYNPEMELNRDINVAATAAFVERLLSKKDILREEIRYVDAFSASGIRGLRIAGEVGIHSTMNDWSHEAFELIKENIKINGLEEKAQATRRNANVLLHEQRFHIVDVDPFGTPSPYLDAAASSAYSMLSVTATDTAPLCGAHLNSGIRKYASVPLNTEYHSEMGLRVLLGACARELAKHEKGMLPLLSHVTRHYVRTYLEVLPGSRKADKTLKSMGFVAHCPRCGFRKPVYGLAVHIEKECPECGGLTKIAGPLWLGPYREPEFCNEVISELEAHPLNTKEKVRKIITFCRDELDIPMFYDQHVICKELGASATGIESLIEALRAGGFEASRTHFTGTSFKTDAPIAEIKKIILALSG.

The region spanning 4–383 is the Trm1 methyltransferase domain; it reads RTIVEGTTKI…APIAEIKKII (380 aa). Residues Arg-41, Arg-78, Asp-94, and Ala-123 each coordinate S-adenosyl-L-methionine. Residues Cys-251, Cys-254, Cys-271, and Cys-274 each coordinate Zn(2+).

This sequence belongs to the class I-like SAM-binding methyltransferase superfamily. Trm1 family.

It catalyses the reaction guanosine(26) in tRNA + 2 S-adenosyl-L-methionine = N(2)-dimethylguanosine(26) in tRNA + 2 S-adenosyl-L-homocysteine + 2 H(+). Its function is as follows. Dimethylates a single guanine residue at position 26 of a number of tRNAs using S-adenosyl-L-methionine as donor of the methyl groups. This is tRNA (guanine(26)-N(2))-dimethyltransferase from Methanosarcina mazei (strain ATCC BAA-159 / DSM 3647 / Goe1 / Go1 / JCM 11833 / OCM 88) (Methanosarcina frisia).